The following is a 344-amino-acid chain: Anthranilate phosphoribosyltransferase (344 aa).

Residues Gly81, 84-85 (GD), Ser89, 91-94 (NIST), 109-117 (KHGNRALSS), and Ala121 contribute to the 5-phospho-alpha-D-ribose 1-diphosphate site. Residue Gly81 coordinates anthranilate. Ser93 contacts Mg(2+). Asn112 lines the anthranilate pocket. Arg167 serves as a coordination point for anthranilate. 2 residues coordinate Mg(2+): Asp226 and Glu227.

This sequence belongs to the anthranilate phosphoribosyltransferase family. Homodimer. The cofactor is Mg(2+).

The catalysed reaction is N-(5-phospho-beta-D-ribosyl)anthranilate + diphosphate = 5-phospho-alpha-D-ribose 1-diphosphate + anthranilate. Its pathway is amino-acid biosynthesis; L-tryptophan biosynthesis; L-tryptophan from chorismate: step 2/5. In terms of biological role, catalyzes the transfer of the phosphoribosyl group of 5-phosphorylribose-1-pyrophosphate (PRPP) to anthranilate to yield N-(5'-phosphoribosyl)-anthranilate (PRA). This is Anthranilate phosphoribosyltransferase from Azorhizobium caulinodans (strain ATCC 43989 / DSM 5975 / JCM 20966 / LMG 6465 / NBRC 14845 / NCIMB 13405 / ORS 571).